The primary structure comprises 191 residues: Ribonuclease HII (191 aa).

One can recognise an RNase H type-2 domain in the interval 16–191 (INLIGIDEAG…KLHRKSFKLL (176 aa)). A divalent metal cation contacts are provided by Asp-22, Glu-23, and Asp-110.

The protein belongs to the RNase HII family. Mn(2+) is required as a cofactor. Mg(2+) serves as cofactor.

It localises to the cytoplasm. The enzyme catalyses Endonucleolytic cleavage to 5'-phosphomonoester.. Functionally, endonuclease that specifically degrades the RNA of RNA-DNA hybrids. The chain is Ribonuclease HII from Campylobacter jejuni subsp. jejuni serotype O:6 (strain 81116 / NCTC 11828).